The sequence spans 366 residues: Mitochondrial substrate carrier family protein H (366 aa).

Residues 1 to 25 show a composition bias toward low complexity; the sequence is MLSNSVNNNNNNNNINNSNSNNNDS. A disordered region spans residues 1-26; sequence MLSNSVNNNNNNNNINNSNSNNNDSN. Solcar repeat units lie at residues 29–121, 132–243, and 259–360; these read KNVK…LKEY, NIYT…LKNK, and SPFF…IKQS. Helical transmembrane passes span 35-55, 96-112, 133-151, 175-192, 262-282, and 340-357; these read MVAS…LDVV, GVTP…TIYF, IYTV…SASV, VAMA…IPLS, FINF…TTPI, and VAKV…FEYI.

The protein belongs to the mitochondrial carrier (TC 2.A.29) family.

Its subcellular location is the mitochondrion inner membrane. Functionally, mitochondrial transporter required for glutathione import into mitochondria. The chain is Mitochondrial substrate carrier family protein H from Dictyostelium discoideum (Social amoeba).